A 167-amino-acid chain; its full sequence is Small ribosomal subunit protein uS5 (167 aa).

The S5 DRBM domain occupies 12-75; it reads IEDRVVAINR…ETARKSLIEV (64 aa).

It belongs to the universal ribosomal protein uS5 family. Part of the 30S ribosomal subunit. Contacts proteins S4 and S8.

Functionally, with S4 and S12 plays an important role in translational accuracy. Its function is as follows. Located at the back of the 30S subunit body where it stabilizes the conformation of the head with respect to the body. In Pediococcus pentosaceus (strain ATCC 25745 / CCUG 21536 / LMG 10740 / 183-1w), this protein is Small ribosomal subunit protein uS5.